Consider the following 280-residue polypeptide: NAD(P)H-quinone oxidoreductase subunit K, chloroplastic (280 aa).

[4Fe-4S] cluster contacts are provided by Cys-65, Cys-66, Cys-130, and Cys-161. Positions 257–280 (LLKDWKQSNQKQEQNVKMMKEEEA) are disordered.

This sequence belongs to the complex I 20 kDa subunit family. As to quaternary structure, NDH is composed of at least 16 different subunits, 5 of which are encoded in the nucleus. [4Fe-4S] cluster serves as cofactor.

The protein localises to the plastid. It is found in the chloroplast thylakoid membrane. The catalysed reaction is a plastoquinone + NADH + (n+1) H(+)(in) = a plastoquinol + NAD(+) + n H(+)(out). It catalyses the reaction a plastoquinone + NADPH + (n+1) H(+)(in) = a plastoquinol + NADP(+) + n H(+)(out). NDH shuttles electrons from NAD(P)H:plastoquinone, via FMN and iron-sulfur (Fe-S) centers, to quinones in the photosynthetic chain and possibly in a chloroplast respiratory chain. The immediate electron acceptor for the enzyme in this species is believed to be plastoquinone. Couples the redox reaction to proton translocation, and thus conserves the redox energy in a proton gradient. The chain is NAD(P)H-quinone oxidoreductase subunit K, chloroplastic from Staurastrum punctulatum (Green alga).